We begin with the raw amino-acid sequence, 510 residues long: Glutamyl-tRNA(Gln) amidotransferase subunit A (510 aa).

Active-site charge relay system residues include K82 and S157. S181 (acyl-ester intermediate) is an active-site residue.

This sequence belongs to the amidase family. GatA subfamily. As to quaternary structure, heterotrimer of A, B and C subunits.

The catalysed reaction is L-glutamyl-tRNA(Gln) + L-glutamine + ATP + H2O = L-glutaminyl-tRNA(Gln) + L-glutamate + ADP + phosphate + H(+). Its function is as follows. Allows the formation of correctly charged Gln-tRNA(Gln) through the transamidation of misacylated Glu-tRNA(Gln) in organisms which lack glutaminyl-tRNA synthetase. The reaction takes place in the presence of glutamine and ATP through an activated gamma-phospho-Glu-tRNA(Gln). The polypeptide is Glutamyl-tRNA(Gln) amidotransferase subunit A (Bordetella avium (strain 197N)).